The primary structure comprises 464 residues: MTRYFSIVLSLLLAVSCVFLPVASARQQQHQPLDRIVAVVDDNVVLKSELDRAIHNVKSQYVGHEGQLPPDEVLQRQVLERLILIKLQVARAQTNGIRVSDDELNQAISSIAENNKTSVDGLRQKLVAEGISFPEFRQSVRDEITVHHLRQGFAQSRIVVSEGEVDTALAQASSGAQYHLQHILVAVPDGATSQQIAIAQKKIDGIKSVIDKGELAFSAAAVRYSDSPNALESGDLGWRSLDEIPEAFAQMVQTMKPGQIVGPLRGTSGFQLLKLVEVRDSAAAAAGPRQMATEYHARHILVRITEKQKEAEAKAKIDTLRARIAGGADFQTVARESSEDANNSNQGGDLGWFPSDAFGADFGNHVKALADGNVSEPFRSAAGWHIVQRLGTRQTDVTRENQRAQIRDTIGQRKLEESYERFLRELRSEAYVSLQIEEPADDHQTPSAAVIPATGAVLPSATKH.

The first 25 residues, 1-25 (MTRYFSIVLSLLLAVSCVFLPVASA), serve as a signal peptide directing secretion. 2 PpiC domains span residues 175 to 277 (GAQY…KLVE) and 292 to 391 (ATEY…QRLG). Positions 439 to 464 (PADDHQTPSAAVIPATGAVLPSATKH) are disordered.

The protein resides in the periplasm. It carries out the reaction [protein]-peptidylproline (omega=180) = [protein]-peptidylproline (omega=0). Its function is as follows. Chaperone involved in the correct folding and assembly of outer membrane proteins. Recognizes specific patterns of aromatic residues and the orientation of their side chains, which are found more frequently in integral outer membrane proteins. May act in both early periplasmic and late outer membrane-associated steps of protein maturation. The polypeptide is Chaperone SurA (Xylella fastidiosa (strain 9a5c)).